We begin with the raw amino-acid sequence, 319 residues long: uncharacterized protein (319 aa).

An N-terminal signal peptide occupies residues 1 to 27 (MYKKFVPFAVFLFLFFVSFEMMENPHA). One can recognise a NodB homology domain in the interval 130-306 (PMVAFLINVA…QIKDKGYALG (177 aa)).

The protein belongs to the polysaccharide deacetylase family.

This is an uncharacterized protein from Bacillus subtilis (strain 168).